The chain runs to 259 residues: tRNA pseudouridine synthase A (259 aa).

The active-site Nucleophile is aspartate 50. Tyrosine 101 serves as a coordination point for substrate.

This sequence belongs to the tRNA pseudouridine synthase TruA family.

It catalyses the reaction uridine(38/39/40) in tRNA = pseudouridine(38/39/40) in tRNA. Its function is as follows. Formation of pseudouridine at positions 38, 39 and 40 in the anticodon stem and loop of transfer RNAs. The chain is tRNA pseudouridine synthase A from Methanocaldococcus jannaschii (strain ATCC 43067 / DSM 2661 / JAL-1 / JCM 10045 / NBRC 100440) (Methanococcus jannaschii).